Reading from the N-terminus, the 158-residue chain is Transcription elongation factor GreA (158 aa).

Positions 48–75 form a coiled coil; the sequence is NSEYDSAKEDQAFVEGRIAQLEKMIRNA.

The protein belongs to the GreA/GreB family.

Functionally, necessary for efficient RNA polymerase transcription elongation past template-encoded arresting sites. The arresting sites in DNA have the property of trapping a certain fraction of elongating RNA polymerases that pass through, resulting in locked ternary complexes. Cleavage of the nascent transcript by cleavage factors such as GreA or GreB allows the resumption of elongation from the new 3'terminus. GreA releases sequences of 2 to 3 nucleotides. The sequence is that of Transcription elongation factor GreA from Shouchella clausii (strain KSM-K16) (Alkalihalobacillus clausii).